Here is a 352-residue protein sequence, read N- to C-terminus: Protein RecA (352 aa).

65–72 (GPESSGKT) contacts ATP.

This sequence belongs to the RecA family.

It localises to the cytoplasm. Can catalyze the hydrolysis of ATP in the presence of single-stranded DNA, the ATP-dependent uptake of single-stranded DNA by duplex DNA, and the ATP-dependent hybridization of homologous single-stranded DNAs. It interacts with LexA causing its activation and leading to its autocatalytic cleavage. This chain is Protein RecA, found in Pseudomonas fluorescens (strain SBW25).